A 1193-amino-acid chain; its full sequence is MERHQPRLHHPAQGSAAGTPYPSSASLRGCRESKMPRRKGPQHPPPPSGPEEPGEKRPKFHLNIRTLTDDMLDKFASIRIPGSKKERPPLPNLKTAFASSDCSAAPLEMMENFPKPLSENELLELFEKMMEDMNLNEDKKAPLREKDFSIKKEMVMQYINTASKTGSLKRSRQISPQEFIHELKMGSADERLVTCLESLRVSLTSNPVSWVESFGHEGLGLLLDILEKLISGKIQEKVVKKNQHKVIQCLKALMNTQYGLERIMSEERSLSLLAKAVDPRHPNMMTDVVKLLSAVCIVGEESILEEVLEALTSAGEEKKIDRFFCIVEGLRHNSVQLQVACMQLINALVTSPDDLDFRLHIRNEFMRCGLKEILPNLKCIKNDGLDIQLKVFDEHKEEDLFELSHRLEDIRAELDEAYDVYNMVWSTVKETRAEGYFISILQHLLLIRNDYFIRQQYFKLIDECVSQIVLHRDGMDPDFTYRKRLDLDLTQFVDICIDQAKLEEFEEKASELYKKFEKEFTDHQETQAELQKKEAKINELQAELQAFKSQFGALPADCNIPLPPSKEGGTGHSALPPPPPLPSGGGVPPPPPPPPPPPLPGMRMPFSGPVPPPPPLGFLGGQNSPPLPILPFGLKPKKEFKPEISMRRLNWLKIRPHEMTENCFWIKVNENKYENVDLLCKLENTFCCQQKERREEEDIEEKKSIKKKIKELKFLDSKIAQNLSIFLSSFRVPYEEIRMMILEVDETRLAESMIQNLIKHLPDQEQLNSLSQFKSEYSNLCEPEQFVVVMSNVKRLRPRLSAILFKLQFEEQVNNIKPDIMAVSTACEEIKKSKSFSKLLELVLLMGNYMNAGSRNAQTFGFNLSSLCKLKDTKSADQKTTLLHFLVEICEEKYPDILNFVDDLEPLDKASKVSVETLEKNLRQMGRQLQQLEKELETFPPPEDLHDKFVTKMSRFVISAKEQYETLSKLHENMEKLYQSIIGYYAIDVKKVSVEDFLTDLNNFRTTFMQAIKENIKKREAEEKEKRVRIAKELAERERLERQQKKKRLLEMKTEGDETGVMDNLLEALQSGAAFRDRRKRTPMPKDVRQSLSPMSQRPVLKVCNHENQKVQLTEGSRSHYNINCNSTRTPVAKELNYNLDTHTSTGRIKAAEKKEACNVESNRKKETELLGSFSKNESVPEVEALLARLRAL.

Residues 1-10 (MERHQPRLHH) are compositionally biased toward basic residues. The segment at 1–57 (MERHQPRLHHPAQGSAAGTPYPSSASLRGCRESKMPRRKGPQHPPPPSGPEEPGEKR) is disordered. Ser26 carries the phosphoserine modification. The Nuclear localization signal motif lies at 36–60 (PRRKGPQHPPPPSGPEEPGEKRPKF). A Phosphothreonine modification is found at Thr68. 2 positions are modified to phosphoserine: Ser77 and Ser175. The region spanning 114-476 (PKPLSENELL…QIVLHRDGMD (363 aa)) is the GBD/FH3 domain. The stretch at 497–554 (IDQAKLEEFEEKASELYKKFEKEFTDHQETQAELQKKEAKINELQAELQAFKSQFGAL) forms a coiled coil. A disordered region spans residues 558–622 (CNIPLPPSKE…PPPLGFLGGQ (65 aa)). Residues 561–631 (PLPPSKEGGT…QNSPPLPILP (71 aa)) form the FH1 domain. Over residues 575–600 (LPPPPPLPSGGGVPPPPPPPPPPPLP) the composition is skewed to pro residues. Ser624 carries the post-translational modification Phosphoserine. In terms of domain architecture, FH2 spans 636 to 1034 (PKKEFKPEIS…EKRVRIAKEL (399 aa)). Residues 1013 to 1056 (KENIKKREAEEKEKRVRIAKELAERERLERQQKKKRLLEMKTEG) are a coiled coil. The DAD domain maps to 1057-1087 (DETGVMDNLLEALQSGAAFRDRRKRTPMPKD). Phosphoserine occurs at positions 1093 and 1179. The short motif at 1184–1193 (EALLARLRAL) is the Nuclear export signal element.

This sequence belongs to the formin homology family. Diaphanous subfamily. In terms of processing, ubiquitinated.

The protein resides in the cytoplasm. Its subcellular location is the nucleus. Actin nucleation and elongation factor required for the assembly of F-actin structures, such as actin cables and stress fibers. Required for cytokinesis, stress fiber formation and transcriptional activation of the serum response factor. Binds to GTP-bound form of Rho and to profilin: acts in a Rho-dependent manner to recruit profilin to the membrane, where it promotes actin polymerization. DFR proteins couple Rho and Src tyrosine kinase during signaling and the regulation of actin dynamics. Also acts as an actin nucleation and elongation factor in the nucleus by promoting nuclear actin polymerization inside the nucleus to drive serum-dependent SRF-MRTFA activity. In Homo sapiens (Human), this protein is Protein diaphanous homolog 3 (DIAPH3).